Reading from the N-terminus, the 439-residue chain is Taxadien-5-alpha-ol O-acetyltransferase (439 aa).

Residues His164 and Asp373 each act as proton acceptor in the active site.

It belongs to the plant acyltransferase family.

It catalyses the reaction taxa-4(20),11-dien-5alpha-ol + acetyl-CoA = taxa-4(20),11-dien-5alpha-yl acetate + CoA. It participates in alkaloid biosynthesis; taxol biosynthesis; 10-deacetyl-2-debenzoylbaccatin III from taxa-4(20),11-dien-5alpha-ol: step 1/3. This Taxus cuspidata (Japanese yew) protein is Taxadien-5-alpha-ol O-acetyltransferase (TAT).